The sequence spans 569 residues: Urease subunit alpha (569 aa).

The Urease domain maps to 131 to 569 (GGIDAHIHWI…LPLAQRYFLF (439 aa)). Ni(2+) contacts are provided by H136, H138, and K219. At K219 the chain carries N6-carboxylysine. Residue H221 participates in substrate binding. Residues H248 and H274 each coordinate Ni(2+). H322 acts as the Proton donor in catalysis. A Ni(2+)-binding site is contributed by D362.

Belongs to the metallo-dependent hydrolases superfamily. Urease alpha subunit family. In terms of assembly, heterotrimer of UreA (gamma), UreB (beta) and UreC (alpha) subunits. Three heterotrimers associate to form the active enzyme. The cofactor is Ni cation. Post-translationally, carboxylation allows a single lysine to coordinate two nickel ions.

It localises to the cytoplasm. The enzyme catalyses urea + 2 H2O + H(+) = hydrogencarbonate + 2 NH4(+). Its pathway is nitrogen metabolism; urea degradation; CO(2) and NH(3) from urea (urease route): step 1/1. The protein is Urease subunit alpha of Magnetococcus marinus (strain ATCC BAA-1437 / JCM 17883 / MC-1).